We begin with the raw amino-acid sequence, 130 residues long: Inner membrane protein YqjF (130 aa).

At 1 to 5 (MKKLE) the chain is on the cytoplasmic side. A helical membrane pass occupies residues 6-26 (DVGVLVARILMPILFITAGWG). Topologically, residues 27-45 (KITGYAGTQQYMEAMGVPG) are periplasmic. The chain crosses the membrane as a helical span at residues 46 to 66 (FMLPLVILLEFGGGLAILFGF). Residues 67-70 (LTRT) are Cytoplasmic-facing. A helical transmembrane segment spans residues 71–91 (TALFTAGFTLLTAFLFHSNFA). Over 92–101 (EGVNSLMFMK) the chain is Periplasmic. Residues 102-122 (NLTISGGFLLLAITGPGAYSI) form a helical membrane-spanning segment. Residues 123–130 (DRLLNKKW) are Cytoplasmic-facing.

This sequence belongs to the DoxX family.

It localises to the cell inner membrane. In Escherichia coli (strain K12), this protein is Inner membrane protein YqjF (yqjF).